The chain runs to 346 residues: [LysW]-lysine/[LysW]-ornithine hydrolase (346 aa).

Position 68 (His68) interacts with Zn(2+). Asp70 is a catalytic residue. Asp92 contacts Zn(2+). The active-site Proton acceptor is the Glu122. Positions 123, 146, and 317 each coordinate Zn(2+).

Belongs to the peptidase M20A family. LysK subfamily. Zn(2+) serves as cofactor. Requires Co(2+) as cofactor.

It localises to the cytoplasm. The enzyme catalyses [amino-group carrier protein]-C-terminal-gamma-(L-lysyl)-L-glutamate + H2O = [amino-group carrier protein]-C-terminal-L-glutamate + L-lysine. It catalyses the reaction [amino-group carrier protein]-C-terminal-gamma-(L-ornithyl)-L-glutamate + H2O = [amino-group carrier protein]-C-terminal-L-glutamate + L-ornithine. It functions in the pathway amino-acid biosynthesis; L-lysine biosynthesis via AAA pathway; L-lysine from L-alpha-aminoadipate (Thermus route): step 5/5. It participates in amino-acid biosynthesis; L-arginine biosynthesis. Catalyzes the release of L-lysine from [LysW]-gamma-L-lysine and the release of L-ornithine from [LysW]-L-ornithine. The polypeptide is [LysW]-lysine/[LysW]-ornithine hydrolase (Saccharolobus islandicus (strain Y.N.15.51 / Yellowstone #2) (Sulfolobus islandicus)).